Reading from the N-terminus, the 201-residue chain is Large ribosomal subunit protein uL4 (201 aa).

The interval 46 to 71 is disordered; that stretch reads QKTRAEITGSGKKPWRQKGTGRARSG.

This sequence belongs to the universal ribosomal protein uL4 family. As to quaternary structure, part of the 50S ribosomal subunit.

Functionally, one of the primary rRNA binding proteins, this protein initially binds near the 5'-end of the 23S rRNA. It is important during the early stages of 50S assembly. It makes multiple contacts with different domains of the 23S rRNA in the assembled 50S subunit and ribosome. Forms part of the polypeptide exit tunnel. The chain is Large ribosomal subunit protein uL4 from Klebsiella pneumoniae (strain 342).